Reading from the N-terminus, the 84-residue chain is ATP synthase subunit c (84 aa).

Helical transmembrane passes span Val8 to Ile28 and Ile56 to Leu76.

This sequence belongs to the ATPase C chain family. As to quaternary structure, F-type ATPases have 2 components, F(1) - the catalytic core - and F(0) - the membrane proton channel. F(1) has five subunits: alpha(3), beta(3), gamma(1), delta(1), epsilon(1). F(0) has three main subunits: a(1), b(2) and c(10-14). The alpha and beta chains form an alternating ring which encloses part of the gamma chain. F(1) is attached to F(0) by a central stalk formed by the gamma and epsilon chains, while a peripheral stalk is formed by the delta and b chains.

The protein resides in the cell membrane. Its function is as follows. F(1)F(0) ATP synthase produces ATP from ADP in the presence of a proton or sodium gradient. F-type ATPases consist of two structural domains, F(1) containing the extramembraneous catalytic core and F(0) containing the membrane proton channel, linked together by a central stalk and a peripheral stalk. During catalysis, ATP synthesis in the catalytic domain of F(1) is coupled via a rotary mechanism of the central stalk subunits to proton translocation. Key component of the F(0) channel; it plays a direct role in translocation across the membrane. A homomeric c-ring of between 10-14 subunits forms the central stalk rotor element with the F(1) delta and epsilon subunits. The polypeptide is ATP synthase subunit c (Clostridium novyi (strain NT)).